Reading from the N-terminus, the 512-residue chain is MVNSLLFGEMALAFGCPPGGGGCAGGGGGGGAGPGPSPVTAALRDDLGSNIHLLKGLNVRFRCFLAKVHELERRNRLLEKQLEQQQSERDRRLRYKTFSREQAVQTGPELLRPSAAGSGQALGAATGVNANAVALGGLPPGGGSHPQHYGRLPGTIWSYTQVRRTGGGGVETVQGPGVSWVHPDGVGVQIDTITPEIRALYNVLAKVKRERDEYKRRWEEELAKRMNLQTMVDTLQEAAQEAEAIQEEMNEKIERLKAELVVFKGLMSDPMTDLDTKIQEKAMKVDMDICRRIDITAKLCDVAQQRNSEDVSKIFQVVPKKKDRKVASDEDISEQDGEVNRFSDEEVGSMNITDEMKRMFNQLRETFDFDDDCDSLTWEENEDTLLLWEDFTNCNPTIDLQGEQEENLGNLIHETESFFKTRDKEYQETIGQIELELATAKSDMNRHLHEYMEMCSMKRGLDVQMETCRRLIKGSADRNSPSPSSVASSDSGSTDEIQEDLEREADVEPMVS.

Residues 50 to 479 (NIHLLKGLNV…RLIKGSADRN (430 aa)) enclose the IF rod domain. The segment at 473–512 (KGSADRNSPSPSSVASSDSGSTDEIQEDLEREADVEPMVS) is disordered. The span at 480–492 (SPSPSSVASSDSG) shows a compositional bias: low complexity. Acidic residues predominate over residues 496-512 (EIQEDLEREADVEPMVS).

The protein belongs to the intermediate filament family.

The chain is Intermediate filament family orphan 2 (Iffo2) from Mus musculus (Mouse).